The chain runs to 463 residues: Chaperone SurA (463 aa).

The N-terminal stretch at 1–25 is a signal peptide; it reads MTKPFSVVLASLLAITSTVSPLASA. 2 PpiC domains span residues 174–276 and 289–388; these read GSQY…KLVE and VTEY…QRVG. Disordered regions lie at residues 329–348 and 431–463; these read ATAKESSEDTNSRGQGGDLG and YRTGDRADDNATAAPAKSPDPAAPSPPPAKPTR. The segment covering 441–450 has biased composition (low complexity); that stretch reads ATAAPAKSPD. Residues 451-463 are compositionally biased toward pro residues; that stretch reads PAAPSPPPAKPTR.

It is found in the periplasm. It carries out the reaction [protein]-peptidylproline (omega=180) = [protein]-peptidylproline (omega=0). Functionally, chaperone involved in the correct folding and assembly of outer membrane proteins. Recognizes specific patterns of aromatic residues and the orientation of their side chains, which are found more frequently in integral outer membrane proteins. May act in both early periplasmic and late outer membrane-associated steps of protein maturation. The sequence is that of Chaperone SurA from Xanthomonas axonopodis pv. citri (strain 306).